A 72-amino-acid chain; its full sequence is Large ribosomal subunit protein bL31 (72 aa).

Residues C16, C18, C38, and C41 each contribute to the Zn(2+) site.

It belongs to the bacterial ribosomal protein bL31 family. Type A subfamily. Part of the 50S ribosomal subunit. The cofactor is Zn(2+).

Binds the 23S rRNA. This is Large ribosomal subunit protein bL31 from Vibrio campbellii (strain ATCC BAA-1116).